A 438-amino-acid chain; its full sequence is Trigger factor (438 aa).

In terms of domain architecture, PPIase FKBP-type spans 163 to 249 (EDFVLIDYEG…LKEIRKQILP (87 aa)).

This sequence belongs to the FKBP-type PPIase family. Tig subfamily.

It localises to the cytoplasm. It carries out the reaction [protein]-peptidylproline (omega=180) = [protein]-peptidylproline (omega=0). Functionally, involved in protein export. Acts as a chaperone by maintaining the newly synthesized protein in an open conformation. Functions as a peptidyl-prolyl cis-trans isomerase. The protein is Trigger factor of Desulfatibacillum aliphaticivorans.